The primary structure comprises 95 residues: Large ribosomal subunit protein bL25 (95 aa).

Belongs to the bacterial ribosomal protein bL25 family. In terms of assembly, part of the 50S ribosomal subunit; part of the 5S rRNA/L5/L18/L25 subcomplex. Contacts the 5S rRNA. Binds to the 5S rRNA independently of L5 and L18.

Functionally, this is one of the proteins that binds to the 5S RNA in the ribosome where it forms part of the central protuberance. The sequence is that of Large ribosomal subunit protein bL25 from Mannheimia succiniciproducens (strain KCTC 0769BP / MBEL55E).